The following is a 287-amino-acid chain: Formamidopyrimidine-DNA glycosylase (287 aa).

Residue P2 is the Schiff-base intermediate with DNA of the active site. Residue E3 is the Proton donor of the active site. K60 serves as the catalytic Proton donor; for beta-elimination activity. 2 residues coordinate DNA: H100 and R119. Residues 249-283 (QVYGREGEPCRHCGTVIAKIKLGGRSAHFCPQCQP) form an FPG-type zinc finger. Catalysis depends on R273, which acts as the Proton donor; for delta-elimination activity.

Belongs to the FPG family. As to quaternary structure, monomer. Zn(2+) serves as cofactor.

The catalysed reaction is Hydrolysis of DNA containing ring-opened 7-methylguanine residues, releasing 2,6-diamino-4-hydroxy-5-(N-methyl)formamidopyrimidine.. It catalyses the reaction 2'-deoxyribonucleotide-(2'-deoxyribose 5'-phosphate)-2'-deoxyribonucleotide-DNA = a 3'-end 2'-deoxyribonucleotide-(2,3-dehydro-2,3-deoxyribose 5'-phosphate)-DNA + a 5'-end 5'-phospho-2'-deoxyribonucleoside-DNA + H(+). Its function is as follows. Involved in base excision repair of DNA damaged by oxidation or by mutagenic agents. Acts as a DNA glycosylase that recognizes and removes damaged bases. Has a preference for oxidized purines, such as 7,8-dihydro-8-oxoguanine (8-oxoG). Has AP (apurinic/apyrimidinic) lyase activity and introduces nicks in the DNA strand. Cleaves the DNA backbone by beta-delta elimination to generate a single-strand break at the site of the removed base with both 3'- and 5'-phosphates. The sequence is that of Formamidopyrimidine-DNA glycosylase (mutM) from Synechocystis sp. (strain ATCC 27184 / PCC 6803 / Kazusa).